The sequence spans 180 residues: MKPQIEVVVGDITTMEVDVIVNAANPSLMGGGGVDGAIHRAAGPQLLEACKTVRQQQGECAPGHAVITIAGDLPAKAVIHAVGPVWQGGENHEARTLQDAYLNCLRLAAANGYKTLAFPAISTGVYGYPKAAAAEIAVDTVSEFLTRKPLPERVYFVCYDEENAQLYQRLLIQRGLTPDA.

Residues 1 to 175 enclose the Macro domain; it reads MKPQIEVVVG…LYQRLLIQRG (175 aa). Substrate contacts are provided by residues 11–12, Asn25, 33–35, and 122–126; these read DI, GVD, and STGVY. The active-site Proton acceptor is the Asp35.

Belongs to the MacroD-type family. YmdB subfamily. As to quaternary structure, homodimer. Interacts with RNase III.

It carries out the reaction 3''-O-acetyl-ADP-D-ribose + H2O = ADP-D-ribose + acetate + H(+). It catalyses the reaction 2''-O-acetyl-ADP-D-ribose + H2O = ADP-D-ribose + acetate + H(+). Deacetylates O-acetyl-ADP ribose to yield ADP-ribose and free acetate. Down-regulates ribonuclease 3 (RNase III) activity. Acts by interacting directly with the region of the ribonuclease that is required for dimerization/activation. This is O-acetyl-ADP-ribose deacetylase from Enterobacter sp. (strain 638).